A 341-amino-acid polypeptide reads, in one-letter code: 2-acylglycerol O-acyltransferase 3 (341 aa).

The next 2 membrane-spanning stretches (helical) occupy residues 29–49 (YVLTFLFMGPFFSLLVFVLLF) and 50–70 (TSLWPFSVFYLVWLYVDWDTP). N-linked (GlcNAc...) asparagine glycosylation is present at N126. The helical transmembrane segment at 137-157 (LFPGLRPWLAVLAGLFYLPVY) threads the bilayer.

This sequence belongs to the diacylglycerol acyltransferase family. In terms of processing, ubiquitinated. Ubiquitination leads to proteasomal degradation. In terms of tissue distribution, selectively expressed in the digestive system. Highly expressed in the ileum, and at lower level in jejunum, duodenum, colon, cecum and the rectum. Not expressed in the stomach and the esophagus and trachea. Expressed at very low level in liver.

The protein resides in the endoplasmic reticulum membrane. The protein localises to the cytoplasm. It is found in the perinuclear region. The enzyme catalyses a 2-acylglycerol + an acyl-CoA = a 1,2-diacylglycerol + CoA. It catalyses the reaction an acyl-CoA + a 1,2-diacyl-sn-glycerol = a triacyl-sn-glycerol + CoA. The catalysed reaction is 2-(9Z-octadecenoyl)-glycerol + (9Z)-octadecenoyl-CoA = 1,2-di-(9Z-octadecenoyl)-sn-glycerol + CoA. It carries out the reaction 2-(9Z-octadecenoyl)-glycerol + hexadecanoyl-CoA = 1-hexadecanoyl-2-(9Z-octadecenoyl)-sn-glycerol + CoA. The enzyme catalyses 1,2-di-(9Z-octadecenoyl)-sn-glycerol + (9Z)-octadecenoyl-CoA = 1,2,3-tri-(9Z-octadecenoyl)-glycerol + CoA. It catalyses the reaction 1-hexadecanoyl-2-(9Z-octadecenoyl)-sn-glycerol + hexadecanoyl-CoA = 1,3-dihexadecanoyl-2-(9Z-octadecenoyl)glycerol + CoA. The catalysed reaction is all-trans-retinol + hexadecanoyl-CoA = all-trans-retinyl hexadecanoate + CoA. It carries out the reaction 1-O-(9Z-octadecenyl)-glycerol + (9Z)-octadecenoyl-CoA = 1-O-(9Z-octadecyl)-3-(9Z-octadecenoyl)-glycerol + CoA. The enzyme catalyses 1-O-(9Z-octadecyl)-3-(9Z-octadecenoyl)-glycerol + (9Z)-octadecenoyl-CoA = 1-O-(9Z-octadecenyl)-2,3-di-(9Z-octadecenoyl)glycerol + CoA. Its pathway is glycerolipid metabolism; triacylglycerol biosynthesis. Functionally, catalyzes the formation of diacylglycerol from 2-monoacylglycerol and fatty acyl-CoA. Also able to catalyze the terminal step in triacylglycerol synthesis by using diacylglycerol and fatty acyl-CoA as substrates. Has a preference toward palmitoyl-CoA and oleoyl-CoA. May be involved in absorption of dietary fat in the small intestine by catalyzing the resynthesis of triacylglycerol in enterocytes. Also able to use 1-monoalkylglycerol (1-MAkG) as an acyl acceptor for the synthesis of monoalkyl-monoacylglycerol (MAMAG). In Homo sapiens (Human), this protein is 2-acylglycerol O-acyltransferase 3.